A 250-amino-acid polypeptide reads, in one-letter code: Deoxynucleoside-5'-monophosphate kinase (250 aa).

Residues G14, D16, and T17 each coordinate ATP. DGMP-binding residues include V44, K65, R130, G137, T138, W150, D170, R172, E176, and S210.

This sequence belongs to the dNMP kinase family. In terms of assembly, monomer.

It catalyses the reaction a 2'-deoxyribonucleoside 5'-phosphate + ATP = a 2'-deoxyribonucleoside 5'-diphosphate + ADP. Allows the synthesis of deoxyribonucleoside triphosphates necessary for the rapid viral DNA replication. Phosphorylates all four dNMPs. The enzyme had the highest activity with dAMP and had about 30% less activity with dTMP and dGMP, respectively. The lowest activity was observed with dCMP as the substrate (about 35% of that with dAMP). The chain is Deoxynucleoside-5'-monophosphate kinase from Escherichia coli (Enterobacteria phage T5).